A 143-amino-acid polypeptide reads, in one-letter code: Transcription antitermination protein NusB (143 aa).

Belongs to the NusB family.

Involved in transcription antitermination. Required for transcription of ribosomal RNA (rRNA) genes. Binds specifically to the boxA antiterminator sequence of the ribosomal RNA (rrn) operons. The chain is Transcription antitermination protein NusB from Dehalococcoides mccartyi (strain CBDB1).